The following is a 178-amino-acid chain: UPF0302 protein Bcer98_1244 (178 aa).

Belongs to the UPF0302 family.

This is UPF0302 protein Bcer98_1244 from Bacillus cytotoxicus (strain DSM 22905 / CIP 110041 / 391-98 / NVH 391-98).